Reading from the N-terminus, the 311-residue chain is Short chain dehydrogenase opdN (311 aa).

6 residues coordinate NADP(+): Leu48, Lys73, Glu96, Asn123, Tyr217, and Lys221. Tyr217 (proton donor) is an active-site residue. Catalysis depends on Lys221, which acts as the Lowers pKa of active site Tyr.

Belongs to the short-chain dehydrogenases/reductases (SDR) family.

The protein operates within secondary metabolite biosynthesis. Functionally, short chain dehydrogenase; part of the gene cluster that mediates the biosynthesis of oxopyrrolidines, polyketide-amino acid hybrid compounds with feature structures of tetramic acid. Does not seem to play a role in oxopyrrolidines A and B biosynthesis. May be involved in further modifications of these oxopyrrolidines. This is Short chain dehydrogenase opdN from Penicillium oxalicum (strain 114-2 / CGMCC 5302) (Penicillium decumbens).